A 99-amino-acid polypeptide reads, in one-letter code: Small ribosomal subunit protein bS20 (99 aa).

It belongs to the bacterial ribosomal protein bS20 family.

Its function is as follows. Binds directly to 16S ribosomal RNA. In Thermomicrobium roseum (strain ATCC 27502 / DSM 5159 / P-2), this protein is Small ribosomal subunit protein bS20.